A 318-amino-acid chain; its full sequence is L-lactate dehydrogenase 1 (318 aa).

Residues Val17, Asp38, Lys43, Tyr69, and 83–84 (GA) each bind NAD(+). Substrate contacts are provided by residues Gln86, Arg92, and 124–127 (NPVD). NAD(+)-binding positions include 122–124 (ATN) and Ser147. Position 152 to 155 (152 to 155 (DTGR)) interacts with substrate. Residues Arg157 and His172 each coordinate beta-D-fructose 1,6-bisphosphate. The active-site Proton acceptor is the His179. Phosphotyrosine is present on Tyr224. Thr233 contacts substrate.

The protein belongs to the LDH/MDH superfamily. LDH family. In terms of assembly, homotetramer.

It is found in the cytoplasm. It carries out the reaction (S)-lactate + NAD(+) = pyruvate + NADH + H(+). It participates in fermentation; pyruvate fermentation to lactate; (S)-lactate from pyruvate: step 1/1. With respect to regulation, allosterically activated by fructose 1,6-bisphosphate (FBP). Functionally, catalyzes the conversion of lactate to pyruvate. The chain is L-lactate dehydrogenase 1 from Peribacillus psychrosaccharolyticus (Bacillus psychrosaccharolyticus).